The chain runs to 510 residues: Serine carboxypeptidase 1 (510 aa).

The N-terminal stretch at Met-1–Gly-25 is a signal peptide. Residues Gly-26–Ala-36 constitute a propeptide that is removed on maturation. 3 disulfides stabilise this stretch: Cys-98–Cys-399, Cys-262–Cys-274, and Cys-297–Cys-366. A glycan (N-linked (GlcNAc...) asparagine) is linked at Asn-154. The active site involves Ser-194. An N-linked (GlcNAc...) asparagine glycan is attached at Asn-268. Positions Ile-303–Ser-362 are cleaved as a propeptide — linker peptide. Asn-418 carries an N-linked (GlcNAc...) asparagine glycan. Residues Asp-434 and His-487 contribute to the active site. Residues Ser-508–Leu-510 carry the Microbody targeting signal motif.

This sequence belongs to the peptidase S10 family.

The catalysed reaction is Release of a C-terminal amino acid with broad specificity.. The chain is Serine carboxypeptidase 1 (CBP1) from Oryza sativa subsp. japonica (Rice).